A 304-amino-acid polypeptide reads, in one-letter code: Putative S-adenosyl-L-methionine-dependent methyltransferase MUL_0816 (304 aa).

S-adenosyl-L-methionine-binding positions include Asp-130 and 159–160; that span reads DL.

The protein belongs to the UPF0677 family.

Its function is as follows. Exhibits S-adenosyl-L-methionine-dependent methyltransferase activity. The chain is Putative S-adenosyl-L-methionine-dependent methyltransferase MUL_0816 from Mycobacterium ulcerans (strain Agy99).